A 1071-amino-acid polypeptide reads, in one-letter code: ATP-dependent helicase/deoxyribonuclease subunit B (1071 aa).

Belongs to the helicase family. AddB/RexB type 2 subfamily. Heterodimer of AddA and RexB. Mg(2+) serves as cofactor.

Functionally, the heterodimer acts as both an ATP-dependent DNA helicase and an ATP-dependent, dual-direction single-stranded exonuclease. Recognizes the chi site generating a DNA molecule suitable for the initiation of homologous recombination. This subunit has 5' -&gt; 3' nuclease activity but not helicase activity. This is ATP-dependent helicase/deoxyribonuclease subunit B from Streptococcus pyogenes serotype M1.